Here is a 1291-residue protein sequence, read N- to C-terminus: Histone-lysine N-methyltransferase SETDB1 (1291 aa).

Positions 18–64 (ESEEIAELQQAVVEELGISMEELRHFIDEELEKMDCVQQRKKQLAEL) form a coiled coil. The tract at residues 108–147 (RDSSSEDESSRPTEIIEIPDEDDDVLSIDSGDAGSRTPKD) is disordered. Phosphoserine is present on residues Ser-112 and Ser-117. Thr-120 carries the phosphothreonine modification. Positions 124–133 (EIPDEDDDVL) are enriched in acidic residues. A Glycyl lysine isopeptide (Lys-Gly) (interchain with G-Cter in SUMO2); alternate cross-link involves residue Lys-182. Residue Lys-182 forms a Glycyl lysine isopeptide (Lys-Gly) (interchain with G-Cter in ubiquitin); alternate linkage. 2 Tudor domains span residues 257 to 320 (KLYV…LKKT) and 347 to 403 (LLKS…SMKT). The tract at residues 404-545 (SSASALEKKQ…APAPSALPAP (142 aa)) is disordered. Over residues 433–444 (QYTQDLTGTGTQ) the composition is skewed to polar residues. The segment covering 448–468 (VEPPQPTAPPAPPFPPAPPLS) has biased composition (pro residues). Residues 477–515 (ESQLAQSRKQVAKKSTSFRPGSVGSGHSSPTSPALSENV) show a composition bias toward polar residues. The segment covering 528-539 (SPLGSTASAPAP) has biased composition (low complexity). One can recognise an MBD domain in the interval 594–665 (YRGKNPLLVP…EMFCLDPYVL (72 aa)). The Pre-SET domain maps to 727-800 (VGCDCKDGCR…MCTNRLVQHG (74 aa)). Zn(2+) contacts are provided by Cys-729, Cys-731, Cys-735, Cys-741, Cys-743, Cys-781, Cys-785, Cys-787, and Cys-792. Residues 803–1266 (VRLQLFKTQN…AGTELTWDYN (464 aa)) enclose the SET domain. Residues 813-815 (KGW), Asp-851, and Tyr-853 contribute to the S-adenosyl-L-methionine site. Lys-867 participates in a covalent cross-link: Glycyl lysine isopeptide (Lys-Gly) (interchain with G-Cter in ubiquitin). Residues 868-1160 (EGYESDAPCS…MTGPMKRQVA (293 aa)) are disordered. The span at 896 to 907 (EDPEESNDDSSD) shows a compositional bias: acidic residues. Positions 951–963 (DLGPPHIPVPPSI) are enriched in pro residues. At Ser-1025 the chain carries Phosphoserine. Residues 1031 to 1050 (IKDEGDIKQAKKEDTDDRNK) are compositionally biased toward basic and acidic residues. A Glycyl lysine isopeptide (Lys-Gly) (interchain with G-Cter in SUMO2); alternate cross-link involves residue Lys-1032. Residue Lys-1032 forms a Glycyl lysine isopeptide (Lys-Gly) (interchain with G-Cter in SUMO1); alternate linkage. Lys-1038 participates in a covalent cross-link: Glycyl lysine isopeptide (Lys-Gly) (interchain with G-Cter in SUMO2). The span at 1052-1063 (SVVTESSRNYGY) shows a compositional bias: polar residues. Ser-1066 carries the phosphoserine modification. Residue Lys-1069 forms a Glycyl lysine isopeptide (Lys-Gly) (interchain with G-Cter in SUMO2) linkage. Over residues 1100-1115 (LTLSSSTESEGESGTS) the composition is skewed to low complexity. Residues 1116–1140 (RKPTAGQTSATAVDSDDIQTISSGS) show a composition bias toward polar residues. Lys-1149 participates in a covalent cross-link: Glycyl lysine isopeptide (Lys-Gly) (interchain with G-Cter in SUMO2). Lys-1170 and Lys-1178 each carry N6,N6,N6-trimethyllysine; alternate. Residues Lys-1170 and Lys-1178 each carry the N6,N6-dimethyllysine; alternate modification. Residues Arg-1220 and 1223–1224 (NH) each bind S-adenosyl-L-methionine. Zn(2+) contacts are provided by Cys-1226, Cys-1279, Cys-1281, and Cys-1286. Residues 1275-1291 (KELLCCCGAIECRGRLL) enclose the Post-SET domain.

It belongs to the class V-like SAM-binding methyltransferase superfamily. Histone-lysine methyltransferase family. Suvar3-9 subfamily. Part of a complex containing at least CDYL, REST, WIZ, SETDB1, EHMT1 and EHMT2. Forms a complex with ATRX, TRIM28 and ZNF274. Probably part of a corepressor complex containing ZNF304, TRIM28, SETDB1 and DNMT1. Interacts with TRIM28/TIF1B. Interacts with ATF7IP and ATF7IP2; the interaction with ATF7IP protects SETDB1 from proteasomal degradation and is required to stimulate histone methyltransferase activity and facilitate the conversion of dimethylated to trimethylated H3 'Lys-9'. Interacts with CBX1 and CBX5. Interacts with DNMT3A and DNMT3B. Interacts with SUMO2. Interacts with MPHOSPH8. Interacts with ERG. Interacts with HDAC1, HDAC2, SIN3A and SIN3B. Interacts with ATRX. Interacts with RESF1. Interacts with ZNF638. Interacts with TASOR. Interacts with ZNF263; recruited to the SIX3 promoter along with other proteins involved in chromatin modification and transcriptional corepression where it contributes to transcriptional repression. Interacts with PHF13; the interaction probably enhances SETDB1 chromatin-associated levels and activity. Interacts with VRK1. Degraded by the proteasome, shielded by interaction with ATF7IP. In terms of processing, monoubiquitinated at Lys-867 by E2 enzymes of the UBE2E family. The conjugated-Ub is protected from deubiquitination by the SET domain. Monoubiquitination at Lys-867 is required for catalytic activity, H3K9 methylation and endogenous retrovirus silencing. In terms of tissue distribution, widely expressed. High expression in testis.

The protein localises to the nucleus. The protein resides in the cytoplasm. It localises to the chromosome. It catalyses the reaction N(6),N(6)-dimethyl-L-lysyl(9)-[histone H3] + S-adenosyl-L-methionine = N(6),N(6),N(6)-trimethyl-L-lysyl(9)-[histone H3] + S-adenosyl-L-homocysteine + H(+). In terms of biological role, histone methyltransferase that specifically trimethylates 'Lys-9' of histone H3. H3 'Lys-9' trimethylation represents a specific tag for epigenetic transcriptional repression by recruiting HP1 (CBX1, CBX3 and/or CBX5) proteins to methylated histones. Mainly functions in euchromatin regions, thereby playing a central role in the silencing of euchromatic genes. H3 'Lys-9' trimethylation is coordinated with DNA methylation. Required for HUSH-mediated heterochromatin formation and gene silencing. Forms a complex with MBD1 and ATF7IP that represses transcription and couples DNA methylation and histone 'Lys-9' trimethylation. Its activity is dependent on MBD1 and is heritably maintained through DNA replication by being recruited by CAF-1. SETDB1 is targeted to histone H3 by TRIM28/TIF1B, a factor recruited by KRAB zinc-finger proteins. Probably forms a corepressor complex required for activated KRAS-mediated promoter hypermethylation and transcriptional silencing of tumor suppressor genes (TSGs) or other tumor-related genes in colorectal cancer (CRC) cells. Required to maintain a transcriptionally repressive state of genes in undifferentiated embryonic stem cells (ESCs). In ESCs, in collaboration with TRIM28, is also required for H3K9me3 and silencing of endogenous and introduced retroviruses in a DNA-methylation independent-pathway. Associates at promoter regions of tumor suppressor genes (TSGs) leading to their gene silencing. The SETDB1-TRIM28-ZNF274 complex may play a role in recruiting ATRX to the 3'-exons of zinc-finger coding genes with atypical chromatin signatures to establish or maintain/protect H3K9me3 at these transcriptionally active regions. This Homo sapiens (Human) protein is Histone-lysine N-methyltransferase SETDB1.